The chain runs to 303 residues: Oxygen-dependent coproporphyrinogen-III oxidase (303 aa).

Position 93 (serine 93) interacts with substrate. A divalent metal cation contacts are provided by histidine 97 and histidine 107. The Proton donor role is filled by histidine 107. 109–111 (NVR) contacts substrate. 2 residues coordinate a divalent metal cation: histidine 149 and histidine 179. Positions 244–279 (YVEFNLVFDRGTLFGLQSGGRTESILLSMPPLAQWR) are important for dimerization. Substrate is bound at residue 262–264 (GGR).

Belongs to the aerobic coproporphyrinogen-III oxidase family. In terms of assembly, homodimer. It depends on a divalent metal cation as a cofactor.

It is found in the cytoplasm. It carries out the reaction coproporphyrinogen III + O2 + 2 H(+) = protoporphyrinogen IX + 2 CO2 + 2 H2O. It participates in porphyrin-containing compound metabolism; protoporphyrin-IX biosynthesis; protoporphyrinogen-IX from coproporphyrinogen-III (O2 route): step 1/1. In terms of biological role, involved in the heme biosynthesis. Catalyzes the aerobic oxidative decarboxylation of propionate groups of rings A and B of coproporphyrinogen-III to yield the vinyl groups in protoporphyrinogen-IX. The sequence is that of Oxygen-dependent coproporphyrinogen-III oxidase from Bordetella pertussis (strain Tohama I / ATCC BAA-589 / NCTC 13251).